The primary structure comprises 616 residues: Dihydroxy-acid dehydratase (616 aa).

D81 lines the Mg(2+) pocket. C122 contacts [2Fe-2S] cluster. Positions 123 and 124 each coordinate Mg(2+). K124 carries the N6-carboxylysine modification. C195 lines the [2Fe-2S] cluster pocket. E491 contributes to the Mg(2+) binding site. S517 (proton acceptor) is an active-site residue.

It belongs to the IlvD/Edd family. Homodimer. [2Fe-2S] cluster is required as a cofactor. The cofactor is Mg(2+).

It catalyses the reaction (2R)-2,3-dihydroxy-3-methylbutanoate = 3-methyl-2-oxobutanoate + H2O. The catalysed reaction is (2R,3R)-2,3-dihydroxy-3-methylpentanoate = (S)-3-methyl-2-oxopentanoate + H2O. It participates in amino-acid biosynthesis; L-isoleucine biosynthesis; L-isoleucine from 2-oxobutanoate: step 3/4. The protein operates within amino-acid biosynthesis; L-valine biosynthesis; L-valine from pyruvate: step 3/4. In terms of biological role, functions in the biosynthesis of branched-chain amino acids. Catalyzes the dehydration of (2R,3R)-2,3-dihydroxy-3-methylpentanoate (2,3-dihydroxy-3-methylvalerate) into 2-oxo-3-methylpentanoate (2-oxo-3-methylvalerate) and of (2R)-2,3-dihydroxy-3-methylbutanoate (2,3-dihydroxyisovalerate) into 2-oxo-3-methylbutanoate (2-oxoisovalerate), the penultimate precursor to L-isoleucine and L-valine, respectively. The chain is Dihydroxy-acid dehydratase from Methylobacillus flagellatus (strain ATCC 51484 / DSM 6875 / VKM B-1610 / KT).